A 263-amino-acid chain; its full sequence is 3-methyl-2-oxobutanoate hydroxymethyltransferase (263 aa).

The Mg(2+) site is built by D45 and D84. 3-methyl-2-oxobutanoate-binding positions include 45–46 (DS), D84, and K112. E114 contacts Mg(2+). The active-site Proton acceptor is E180.

This sequence belongs to the PanB family. Homodecamer; pentamer of dimers. Requires Mg(2+) as cofactor.

The protein localises to the cytoplasm. It catalyses the reaction 3-methyl-2-oxobutanoate + (6R)-5,10-methylene-5,6,7,8-tetrahydrofolate + H2O = 2-dehydropantoate + (6S)-5,6,7,8-tetrahydrofolate. It functions in the pathway cofactor biosynthesis; (R)-pantothenate biosynthesis; (R)-pantoate from 3-methyl-2-oxobutanoate: step 1/2. Its function is as follows. Catalyzes the reversible reaction in which hydroxymethyl group from 5,10-methylenetetrahydrofolate is transferred onto alpha-ketoisovalerate to form ketopantoate. This is 3-methyl-2-oxobutanoate hydroxymethyltransferase from Salmonella agona (strain SL483).